A 340-amino-acid chain; its full sequence is Glycerol-3-phosphate dehydrogenase [NAD(P)+] (340 aa).

Residues serine 12, tryptophan 13, lysine 34, and lysine 107 each contribute to the NADPH site. Sn-glycerol 3-phosphate is bound by residues lysine 107, glycine 138, and serine 140. Alanine 142 serves as a coordination point for NADPH. 5 residues coordinate sn-glycerol 3-phosphate: lysine 193, aspartate 246, serine 256, arginine 257, and asparagine 258. Catalysis depends on lysine 193, which acts as the Proton acceptor. Arginine 257 is an NADPH binding site. Residues isoleucine 281 and glutamate 283 each contribute to the NADPH site.

The protein belongs to the NAD-dependent glycerol-3-phosphate dehydrogenase family.

The protein localises to the cytoplasm. The catalysed reaction is sn-glycerol 3-phosphate + NAD(+) = dihydroxyacetone phosphate + NADH + H(+). It catalyses the reaction sn-glycerol 3-phosphate + NADP(+) = dihydroxyacetone phosphate + NADPH + H(+). It participates in membrane lipid metabolism; glycerophospholipid metabolism. In terms of biological role, catalyzes the reduction of the glycolytic intermediate dihydroxyacetone phosphate (DHAP) to sn-glycerol 3-phosphate (G3P), the key precursor for phospholipid synthesis. This chain is Glycerol-3-phosphate dehydrogenase [NAD(P)+], found in Enterococcus faecalis (strain ATCC 700802 / V583).